Reading from the N-terminus, the 171-residue chain is Co-chaperone protein HscB (171 aa).

The J domain occupies 2-74; it reads DYFTLFGLPA…LTRAEYLLSL (73 aa).

The protein belongs to the HscB family. As to quaternary structure, interacts with HscA and stimulates its ATPase activity. Interacts with IscU.

Co-chaperone involved in the maturation of iron-sulfur cluster-containing proteins. Seems to help targeting proteins to be folded toward HscA. The chain is Co-chaperone protein HscB from Salmonella heidelberg (strain SL476).